The primary structure comprises 201 residues: Dynactin subunit 6 (201 aa).

The protein belongs to the dynactin subunits 5/6 family. Dynactin subunit 6 subfamily. In terms of assembly, member of the pointed-end complex of the dynactin shoulder complex which contains dctn4, dctn5 and dctn6 subunits and Actr10. Within the complex dctn6 forms a heterodimer with dctn5. Interacts with plk1.

Its subcellular location is the cytoplasm. The protein localises to the cytoskeleton. It is found in the chromosome. The protein resides in the centromere. It localises to the kinetochore. Part of the dynactin complex that activates the molecular motor dynein for ultra-processive transport along microtubules. This Xenopus tropicalis (Western clawed frog) protein is Dynactin subunit 6 (dctn6).